Reading from the N-terminus, the 184-residue chain is Prolyl-tRNA synthetase associated domain-containing protein 1 (184 aa).

This sequence belongs to the PRORSD1 family.

This chain is Prolyl-tRNA synthetase associated domain-containing protein 1 (Prorsd1), found in Danio rerio (Zebrafish).